The following is a 277-amino-acid chain: Urease accessory protein UreD (277 aa).

Belongs to the UreD family. As to quaternary structure, ureD, UreF and UreG form a complex that acts as a GTP-hydrolysis-dependent molecular chaperone, activating the urease apoprotein by helping to assemble the nickel containing metallocenter of UreC. The UreE protein probably delivers the nickel.

It localises to the cytoplasm. In terms of biological role, required for maturation of urease via the functional incorporation of the urease nickel metallocenter. The sequence is that of Urease accessory protein UreD from Pseudomonas putida (strain W619).